The sequence spans 307 residues: Fe-S cluster assembly protein dre2 (307 aa).

2 disordered regions span residues 1 to 26 (MTPVPVSVDTTADFAAPPTKTAPSTS) and 159 to 179 (KKKKAPAPTEQPPVATGVGFV). Residues 15 to 26 (AAPPTKTAPSTS) are compositionally biased toward low complexity. The tract at residues 23–152 (PSTSTRTLLL…EKPAYQEAAV (130 aa)) is N-terminal SAM-like domain. The linker stretch occupies residues 153–197 (PLRLGGKKKKAPAPTEQPPVATGVGFVDGNDELIDEDDLLSDDDL). Residues C207, C219, C222, and C224 each coordinate [2Fe-2S] cluster. Residues 207–224 (CQPEKAKKRRRPCKDCTC) are fe-S binding site A. Residues C270, C273, C281, and C284 each contribute to the [4Fe-4S] cluster site. 2 short sequence motifs (cx2C motif) span residues 270 to 273 (CNSC) and 281 to 284 (CSSC). The tract at residues 270-284 (CNSCSLGDAFRCSSC) is fe-S binding site B.

It belongs to the anamorsin family. Monomer. Interacts with tah18. Interacts with mia40. [2Fe-2S] cluster is required as a cofactor. It depends on [4Fe-4S] cluster as a cofactor.

The protein resides in the cytoplasm. It localises to the mitochondrion intermembrane space. Component of the cytosolic iron-sulfur (Fe-S) protein assembly (CIA) machinery required for the maturation of extramitochondrial Fe-S proteins. Part of an electron transfer chain functioning in an early step of cytosolic Fe-S biogenesis, facilitating the de novo assembly of a [4Fe-4S] cluster on the scaffold complex cfd1-nbp35. Electrons are transferred to dre2 from NADPH via the FAD- and FMN-containing protein tah18. Tah18-dre2 are also required for the assembly of the diferric tyrosyl radical cofactor of ribonucleotide reductase (RNR), probably by providing electrons for reduction during radical cofactor maturation in the catalytic small subunit rnr2. This Aspergillus terreus (strain NIH 2624 / FGSC A1156) protein is Fe-S cluster assembly protein dre2.